The primary structure comprises 320 residues: Acetaldehyde dehydrogenase 2 (320 aa).

C129 (acyl-thioester intermediate) is an active-site residue. NAD(+) contacts are provided by residues 160–168 (SAGPGTRAN) and N287.

Belongs to the acetaldehyde dehydrogenase family.

It catalyses the reaction acetaldehyde + NAD(+) + CoA = acetyl-CoA + NADH + H(+). This chain is Acetaldehyde dehydrogenase 2, found in Burkholderia cenocepacia (strain ATCC BAA-245 / DSM 16553 / LMG 16656 / NCTC 13227 / J2315 / CF5610) (Burkholderia cepacia (strain J2315)).